A 405-amino-acid chain; its full sequence is Tryptophan synthase beta chain (405 aa).

Lys-96 carries the N6-(pyridoxal phosphate)lysine modification.

The protein belongs to the TrpB family. As to quaternary structure, tetramer of two alpha and two beta chains. It depends on pyridoxal 5'-phosphate as a cofactor.

The enzyme catalyses (1S,2R)-1-C-(indol-3-yl)glycerol 3-phosphate + L-serine = D-glyceraldehyde 3-phosphate + L-tryptophan + H2O. The protein operates within amino-acid biosynthesis; L-tryptophan biosynthesis; L-tryptophan from chorismate: step 5/5. The beta subunit is responsible for the synthesis of L-tryptophan from indole and L-serine. In Clostridium botulinum (strain Eklund 17B / Type B), this protein is Tryptophan synthase beta chain.